Here is a 360-residue protein sequence, read N- to C-terminus: F-box protein SKP2B (360 aa).

The F-box domain occupies 25-76 (ISEWKDIPVELLMKILNLVDDRTVIIASCICSGWRDAVSLGLTRLSLSWCKK). LRR repeat units follow at residues 77-99 (NMNS…VLRQ), 101-126 (KPQL…DLSK), 127-152 (SSKI…NLSG), 153-178 (CTSF…NLCG), 180-205 (VEAV…NLGW), 206-231 (CENI…DLCS), 232-257 (CVLI…GLYY), 258-301 (CRNI…NISQ), and 302-333 (CTYL…VMSG).

Functionally, component of SCF(SKP2B) E3 ubiquitin ligase complexes, which mediate the ubiquitination and subsequent proteasomal degradation of the cyclin-dependent kinase inhibitor KRP1. Does not interact with auxin. The chain is F-box protein SKP2B (SKP2B) from Arabidopsis thaliana (Mouse-ear cress).